A 108-amino-acid polypeptide reads, in one-letter code: MNKIIELTDQNFEEQVLNSKSFFLVDFWAQWCNPCKILAPILEEISKEYSNKVIVGKLNIEENPNTAPVYSIRSIPTLLLFNNSEVLATKVGAVSKLELKEFLDENIN.

The Thioredoxin domain maps to 2–108; sequence NKIIELTDQN…LKEFLDENIN (107 aa). A disulfide bridge links Cys32 with Cys35.

Belongs to the thioredoxin family.

Its function is as follows. Participates in various redox reactions through the reversible oxidation of its active center dithiol to a disulfide and catalyzes dithiol-disulfide exchange reactions. This chain is Thioredoxin (trxA), found in Buchnera aphidicola subsp. Acyrthosiphon pisum (strain APS) (Acyrthosiphon pisum symbiotic bacterium).